The primary structure comprises 360 residues: Phosphoserine aminotransferase (360 aa).

L-glutamate is bound at residue Arg42. Residues 76 to 77 (AS), Trp102, Thr152, Asp172, and Gln195 contribute to the pyridoxal 5'-phosphate site. Lys196 carries the post-translational modification N6-(pyridoxal phosphate)lysine. Position 237 to 238 (237 to 238 (NT)) interacts with pyridoxal 5'-phosphate.

It belongs to the class-V pyridoxal-phosphate-dependent aminotransferase family. SerC subfamily. In terms of assembly, homodimer. Pyridoxal 5'-phosphate serves as cofactor.

The protein resides in the cytoplasm. It carries out the reaction O-phospho-L-serine + 2-oxoglutarate = 3-phosphooxypyruvate + L-glutamate. The enzyme catalyses 4-(phosphooxy)-L-threonine + 2-oxoglutarate = (R)-3-hydroxy-2-oxo-4-phosphooxybutanoate + L-glutamate. The protein operates within amino-acid biosynthesis; L-serine biosynthesis; L-serine from 3-phospho-D-glycerate: step 2/3. Functionally, catalyzes the reversible conversion of 3-phosphohydroxypyruvate to phosphoserine and of 3-hydroxy-2-oxo-4-phosphonooxybutanoate to phosphohydroxythreonine. This Bacillus cereus (strain ATCC 10987 / NRS 248) protein is Phosphoserine aminotransferase.